The following is a 267-amino-acid chain: Imidazole glycerol phosphate synthase subunit HisF (267 aa).

Active-site residues include D22 and D141.

This sequence belongs to the HisA/HisF family. As to quaternary structure, heterodimer of HisH and HisF.

The protein resides in the cytoplasm. It carries out the reaction 5-[(5-phospho-1-deoxy-D-ribulos-1-ylimino)methylamino]-1-(5-phospho-beta-D-ribosyl)imidazole-4-carboxamide + L-glutamine = D-erythro-1-(imidazol-4-yl)glycerol 3-phosphate + 5-amino-1-(5-phospho-beta-D-ribosyl)imidazole-4-carboxamide + L-glutamate + H(+). The protein operates within amino-acid biosynthesis; L-histidine biosynthesis; L-histidine from 5-phospho-alpha-D-ribose 1-diphosphate: step 5/9. IGPS catalyzes the conversion of PRFAR and glutamine to IGP, AICAR and glutamate. The HisF subunit catalyzes the cyclization activity that produces IGP and AICAR from PRFAR using the ammonia provided by the HisH subunit. The protein is Imidazole glycerol phosphate synthase subunit HisF of Mycobacterium tuberculosis (strain ATCC 25177 / H37Ra).